The chain runs to 411 residues: Serine hydroxymethyltransferase (411 aa).

(6S)-5,6,7,8-tetrahydrofolate-binding positions include leucine 119 and 123–125 (GHL). The residue at position 228 (lysine 228) is an N6-(pyridoxal phosphate)lysine. 351-353 (SPF) contacts (6S)-5,6,7,8-tetrahydrofolate.

This sequence belongs to the SHMT family. In terms of assembly, homodimer. It depends on pyridoxal 5'-phosphate as a cofactor.

The protein localises to the cytoplasm. The enzyme catalyses (6R)-5,10-methylene-5,6,7,8-tetrahydrofolate + glycine + H2O = (6S)-5,6,7,8-tetrahydrofolate + L-serine. Its pathway is one-carbon metabolism; tetrahydrofolate interconversion. It functions in the pathway amino-acid biosynthesis; glycine biosynthesis; glycine from L-serine: step 1/1. Its function is as follows. Catalyzes the reversible interconversion of serine and glycine with tetrahydrofolate (THF) serving as the one-carbon carrier. This reaction serves as the major source of one-carbon groups required for the biosynthesis of purines, thymidylate, methionine, and other important biomolecules. Also exhibits THF-independent aldolase activity toward beta-hydroxyamino acids, producing glycine and aldehydes, via a retro-aldol mechanism. In Clostridium botulinum (strain Eklund 17B / Type B), this protein is Serine hydroxymethyltransferase.